A 126-amino-acid chain; its full sequence is Glycine cleavage system H protein (126 aa).

Residues 21–103 (TVTIGISEHA…YEGGWIVKVK (83 aa)) form the Lipoyl-binding domain. Lysine 62 bears the N6-lipoyllysine mark.

This sequence belongs to the GcvH family. As to quaternary structure, the glycine cleavage system is composed of four proteins: P, T, L and H. (R)-lipoate is required as a cofactor.

In terms of biological role, the glycine cleavage system catalyzes the degradation of glycine. The H protein shuttles the methylamine group of glycine from the P protein to the T protein. This chain is Glycine cleavage system H protein, found in Vibrio atlanticus (strain LGP32) (Vibrio splendidus (strain Mel32)).